The sequence spans 93 residues: uncharacterized protein (93 aa).

Residues 26-73 (NRGTIFRPMTRNSGIVGRRGGPVAPAPFRNNVQKPGTRPPGFKPPSGV) are disordered.

This is an uncharacterized protein from Caenorhabditis elegans.